The primary structure comprises 599 residues: Elongation factor 4 (599 aa).

One can recognise a tr-type G domain in the interval 5-187; the sequence is SHIRNFSIIA…RLVAVIPPPT (183 aa). GTP is bound by residues 17–22 and 134–137; these read DHGKST and NKMD.

The protein belongs to the TRAFAC class translation factor GTPase superfamily. Classic translation factor GTPase family. LepA subfamily.

It is found in the cell inner membrane. The enzyme catalyses GTP + H2O = GDP + phosphate + H(+). Its function is as follows. Required for accurate and efficient protein synthesis under certain stress conditions. May act as a fidelity factor of the translation reaction, by catalyzing a one-codon backward translocation of tRNAs on improperly translocated ribosomes. Back-translocation proceeds from a post-translocation (POST) complex to a pre-translocation (PRE) complex, thus giving elongation factor G a second chance to translocate the tRNAs correctly. Binds to ribosomes in a GTP-dependent manner. In Stutzerimonas stutzeri (strain A1501) (Pseudomonas stutzeri), this protein is Elongation factor 4.